Here is a 230-residue protein sequence, read N- to C-terminus: MAKKKSKKYLEAAKQVEEGKLYNASEAFGLVKKIDFANFDATIEVAFNLNVDTKQADQQLRGAMVLPNGTGKDQTVVVFAKGAKAQEAKDAGADVVGDDDLVARIQDGWLDFDVAIATPDMMAQVGRLGRVLGPKGLMPNPKTGTVTMDVTKAVTDAKSGQVTYRTDRDGNVHVPLGKVSFTEEALEGNFKAVYDVIAKARPASVKGVYIKHVSVASTFGPSVTLDTTAL.

The protein belongs to the universal ribosomal protein uL1 family. As to quaternary structure, part of the 50S ribosomal subunit.

Its function is as follows. Binds directly to 23S rRNA. The L1 stalk is quite mobile in the ribosome, and is involved in E site tRNA release. Protein L1 is also a translational repressor protein, it controls the translation of the L11 operon by binding to its mRNA. The chain is Large ribosomal subunit protein uL1 from Ligilactobacillus salivarius (strain UCC118) (Lactobacillus salivarius).